Here is a 765-residue protein sequence, read N- to C-terminus: Polyribonucleotide nucleotidyltransferase (765 aa).

2 residues coordinate Mg(2+): Asp556 and Asp562. The KH domain maps to 622–681 (PRITKISIPQNKIGEVIGPKGKTINQITEETGANISIEDDGTVFVSAVGGEAAEAAIEKI). Residues 693–762 (GDRFLGTVVK…NRGKISLVPV (70 aa)) form the S1 motif domain.

It belongs to the polyribonucleotide nucleotidyltransferase family. Mg(2+) serves as cofactor.

The protein resides in the cytoplasm. It catalyses the reaction RNA(n+1) + phosphate = RNA(n) + a ribonucleoside 5'-diphosphate. In terms of biological role, involved in mRNA degradation. Catalyzes the phosphorolysis of single-stranded polyribonucleotides processively in the 3'- to 5'-direction. In Corynebacterium urealyticum (strain ATCC 43042 / DSM 7109), this protein is Polyribonucleotide nucleotidyltransferase.